Consider the following 208-residue polypeptide: WEB family protein At2g17940 (208 aa).

Residues 78-113 (RTLQLNTSLSNRIKTLTQELELGKKEIQRLSRTRSS) adopt a coiled-coil conformation.

Belongs to the WEB family.

The sequence is that of WEB family protein At2g17940 from Arabidopsis thaliana (Mouse-ear cress).